We begin with the raw amino-acid sequence, 303 residues long: tRNA pseudouridine synthase B (303 aa).

Asp47 acts as the Nucleophile in catalysis.

This sequence belongs to the pseudouridine synthase TruB family. Type 1 subfamily.

It carries out the reaction uridine(55) in tRNA = pseudouridine(55) in tRNA. Responsible for synthesis of pseudouridine from uracil-55 in the psi GC loop of transfer RNAs. The chain is tRNA pseudouridine synthase B from Legionella pneumophila subsp. pneumophila (strain Philadelphia 1 / ATCC 33152 / DSM 7513).